The chain runs to 369 residues: Glutamate 5-kinase (369 aa).

Lys-8 is a binding site for ATP. Ser-49, Asp-136, and Asn-148 together coordinate substrate. Residues Thr-168–Asp-169 and Thr-211–Lys-217 contribute to the ATP site. In terms of domain architecture, PUA spans Lys-276 to Ala-354.

This sequence belongs to the glutamate 5-kinase family.

It localises to the cytoplasm. The catalysed reaction is L-glutamate + ATP = L-glutamyl 5-phosphate + ADP. It functions in the pathway amino-acid biosynthesis; L-proline biosynthesis; L-glutamate 5-semialdehyde from L-glutamate: step 1/2. Its function is as follows. Catalyzes the transfer of a phosphate group to glutamate to form L-glutamate 5-phosphate. This Thermosynechococcus vestitus (strain NIES-2133 / IAM M-273 / BP-1) protein is Glutamate 5-kinase.